The sequence spans 228 residues: Heat shock 70-related protein 4 (228 aa).

The interval 57-80 is disordered; sequence RWHEPPGNTVFDEAHDRPQVRRPD. Basic and acidic residues predominate over residues 68 to 80; the sequence is DEAHDRPQVRRPD.

This sequence belongs to the heat shock protein 70 family.

This chain is Heat shock 70-related protein 4 (HSP70.4), found in Leishmania major.